A 72-amino-acid polypeptide reads, in one-letter code: Prokaryotic ubiquitin-like protein Pup (72 aa).

Gly residues predominate over residues 1 to 10 (MATKDTGGGQ). A disordered region spans residues 1 to 45 (MATKDTGGGQQKATRSTEEVEEQAQDAQASEDLKERQEKLSDDVD). The stretch at 10–60 (QQKATRSTEEVEEQAQDAQASEDLKERQEKLSDDVDSVLDEIDDVLEENAE) forms a coiled coil. An ARC ATPase binding region spans residues 28 to 66 (QASEDLKERQEKLSDDVDSVLDEIDDVLEENAEDFVRSF). Basic and acidic residues predominate over residues 31–42 (EDLKERQEKLSD). Glutamate 72 participates in a covalent cross-link: Isoglutamyl lysine isopeptide (Glu-Lys) (interchain with K-? in acceptor proteins).

It belongs to the prokaryotic ubiquitin-like protein family. Strongly interacts with the proteasome-associated ATPase ARC through a hydrophobic interface; the interacting region of Pup lies in its C-terminal half. There is one Pup binding site per ARC hexamer ring.

It participates in protein degradation; proteasomal Pup-dependent pathway. Its function is as follows. Protein modifier that is covalently attached to lysine residues of substrate proteins, thereby targeting them for proteasomal degradation. The tagging system is termed pupylation. The protein is Prokaryotic ubiquitin-like protein Pup of Streptomyces coelicolor (strain ATCC BAA-471 / A3(2) / M145).